A 178-amino-acid polypeptide reads, in one-letter code: GTP-dependent dephospho-CoA kinase (178 aa).

5 residues coordinate GTP: Asp55, Val57, Asp74, Lys76, and Glu127.

Belongs to the GTP-dependent DPCK family.

The catalysed reaction is 3'-dephospho-CoA + GTP = GDP + CoA + H(+). It functions in the pathway cofactor biosynthesis; coenzyme A biosynthesis. Functionally, catalyzes the GTP-dependent phosphorylation of the 3'-hydroxyl group of dephosphocoenzyme A to form coenzyme A (CoA). The polypeptide is GTP-dependent dephospho-CoA kinase (Saccharolobus islandicus (strain Y.N.15.51 / Yellowstone #2) (Sulfolobus islandicus)).